A 426-amino-acid polypeptide reads, in one-letter code: Acetylglutamate kinase (426 aa).

Residues 1-252 (MASAKEISQY…PLESSVSITR (252 aa)) are acetylglutamate kinase. Residues 59 to 60 (AG), R81, and N170 each bind substrate. Residues 253-426 (PADLAKELFT…CATRQPTLLG (174 aa)) are unknown. In terms of domain architecture, N-acetyltransferase spans 274–425 (ERVLRATSWD…HCATRQPTLL (152 aa)).

This sequence in the N-terminal section; belongs to the acetylglutamate kinase family. ArgB subfamily.

It is found in the cytoplasm. The enzyme catalyses N-acetyl-L-glutamate + ATP = N-acetyl-L-glutamyl 5-phosphate + ADP. The protein operates within amino-acid biosynthesis; L-arginine biosynthesis; N(2)-acetyl-L-ornithine from L-glutamate: step 2/4. This chain is Acetylglutamate kinase (argB), found in Xanthomonas campestris pv. campestris (strain ATCC 33913 / DSM 3586 / NCPPB 528 / LMG 568 / P 25).